Consider the following 474-residue polypeptide: Replication-associated protein (474 aa).

The short motif at 248 to 255 is the Nuclear localization signal element; it reads GKRFQEDR. Residues 455–474 form a disordered region; that stretch reads AFAPGFSLTSEPEPKRRRFF.

The protein resides in the host nucleus. In terms of biological role, plays an essential for the replication of viral DNA. Presumably cleaves viral genomic dsRNA replicative form to initiate rolling circle replication. This chain is Replication-associated protein, found in Avon-Heathcote Estuary associated kieseladnavirus (AHEaBV).